The primary structure comprises 74 residues: Peptide BmKa2 (74 aa).

An N-terminal signal peptide occupies residues 1 to 24 (MSSKTLLVLLLVGVLVSTFFTADA).

Belongs to the non-disulfide-bridged peptide (NDBP) superfamily. Long chain multifunctional peptide (group 2) family. Expressed by the venom gland.

The protein localises to the secreted. Its function is as follows. Highly acidic peptide that may have antibacterial activity. This chain is Peptide BmKa2, found in Olivierus martensii (Manchurian scorpion).